We begin with the raw amino-acid sequence, 355 residues long: MSAPVRIAIDAMGGDHGPEVVLPGVELARVRHPDTSFLLFGDEAAIRPILARYPALSTASRIIHTDVVVGMDDKPSQALRRGRYKSSMWRCIDAVKAGEADAAVSAGNTGALMAMAKVNLRTMPGIGRPAIAAIWPTLRGESIVLDVGASIGATSQSLIEMAIMGSAMASTVFDIERPTVGLLNVGVEEVKGVEEVKEAGRILREEGVAGVNYFGFVEGNDIGSGTVDVVVTEGFSGNIALKTAEGTAKQIASYLRAALSRTWRAKLGYLLARDAFAALREKLDPRRSNGGVFLGLNGVVIKSHGGTDAEGFAAAVDLGYDMVRHRLLERIEKSIVTRLPAAGRGSEPVEAEGSS.

It belongs to the PlsX family. In terms of assembly, homodimer. Probably interacts with PlsY.

The protein resides in the cytoplasm. It catalyses the reaction a fatty acyl-[ACP] + phosphate = an acyl phosphate + holo-[ACP]. Its pathway is lipid metabolism; phospholipid metabolism. Its function is as follows. Catalyzes the reversible formation of acyl-phosphate (acyl-PO(4)) from acyl-[acyl-carrier-protein] (acyl-ACP). This enzyme utilizes acyl-ACP as fatty acyl donor, but not acyl-CoA. This Azorhizobium caulinodans (strain ATCC 43989 / DSM 5975 / JCM 20966 / LMG 6465 / NBRC 14845 / NCIMB 13405 / ORS 571) protein is Phosphate acyltransferase.